A 350-amino-acid polypeptide reads, in one-letter code: MIYSLLLSALPLLSSAALTYRGADISSLLIEEDAGISYKNLNGETQALEDILVNNGVNSIRQRVWVDPSDGSYDLDYNLKLAKRVQAAGMSIYLDLHLSDTWADPSDQTTPTGWSTTDIDTLTWQLYNYTLDVCNTFAENDIDIEIVSIGNEISSGLLWPLGKTSNYDNIAKLLHSGAWGVKDSNQATTPKIMIHLDNGWDWEEQEYFYKTVLATGSLLSTDFDLMGVSYYPFYSSEATLSALQTSLTNMQSNYDKSVVVVETNWPVSCPDPEYSFPSDLSSIPFSAAGQEEFLEKLAEVVEGVTDGLGIYYWEPAWVDNAALGSSCADNLMVDIDTDEVLESVTVFEDL.

A signal peptide spans 1–16 (MIYSLLLSALPLLSSA). The N-linked (GlcNAc...) asparagine glycan is linked to Asn128. Glu152 acts as the Proton donor in catalysis. Residue Glu262 is the Nucleophile of the active site.

This sequence belongs to the glycosyl hydrolase 53 family.

Its subcellular location is the secreted. It catalyses the reaction The enzyme specifically hydrolyzes (1-&gt;4)-beta-D-galactosidic linkages in type I arabinogalactans.. Endogalactanase involved in the degradation of plant cell wall polysaccharides, and more particularly of hairy regions of pectin. In Aspergillus niger (strain ATCC MYA-4892 / CBS 513.88 / FGSC A1513), this protein is Probable arabinogalactan endo-beta-1,4-galactanase A (galA).